A 657-amino-acid polypeptide reads, in one-letter code: N-acetylgalactosaminyltransferase 7 (657 aa).

Residues Met1–Gly6 lie on the Cytoplasmic side of the membrane. The helical; Signal-anchor for type II membrane protein transmembrane segment at Phe7–Thr29 threads the bilayer. The Lumenal portion of the chain corresponds to Pro30–Val657. A disordered region spans residues Arg31–Arg65. Cystine bridges form between Cys197-Cys435, Cys426-Cys507, Cys545-Cys562, Cys585-Cys600, and Cys625-Cys640. Positions Leu206–Pro317 are catalytic subdomain A. Residues Asp247 and Arg277 each coordinate substrate. Mn(2+) is bound by residues Asp301 and His303. Residues Pro381–Arg443 form a catalytic subdomain B region. A substrate-binding site is contributed by Trp412. A Mn(2+)-binding site is contributed by His440. Substrate is bound at residue Arg443. The Ricin B-type lectin domain maps to Val532–Asn652.

It belongs to the glycosyltransferase 2 family. GalNAc-T subfamily. Mn(2+) is required as a cofactor. In terms of tissue distribution, widely expressed. Expressed in uterus, retina, kidney, small intestine, omentum, stomach and CNS.

The protein localises to the golgi apparatus membrane. It catalyses the reaction L-seryl-[protein] + UDP-N-acetyl-alpha-D-galactosamine = a 3-O-[N-acetyl-alpha-D-galactosaminyl]-L-seryl-[protein] + UDP + H(+). It carries out the reaction L-threonyl-[protein] + UDP-N-acetyl-alpha-D-galactosamine = a 3-O-[N-acetyl-alpha-D-galactosaminyl]-L-threonyl-[protein] + UDP + H(+). The protein operates within protein modification; protein glycosylation. Glycopeptide transferase involved in O-linked oligosaccharide biosynthesis, which catalyzes the transfer of an N-acetyl-D-galactosamine residue to an already glycosylated peptide. In contrast to other proteins of the family, it does not act as a peptide transferase that transfers GalNAc onto serine or threonine residue on the protein receptor, but instead requires the prior addition of a GalNAc on a peptide before adding additional GalNAc moieties. Some peptide transferase activity is however not excluded, considering that its appropriate peptide substrate may remain unidentified. The protein is N-acetylgalactosaminyltransferase 7 (GALNT7) of Homo sapiens (Human).